Reading from the N-terminus, the 182-residue chain is Unknown protein 1 (182 aa).

This chain is Unknown protein 1, found in Helianthus annuus (Common sunflower).